Here is a 201-residue protein sequence, read N- to C-terminus: Alpha-1-acid glycoprotein 1 (201 aa).

A signal peptide spans 1–18; the sequence is MALSWVLTVLSLLPLLEA. Glutamine 19 bears the Pyrrolidone carboxylic acid mark. 2 cysteine pairs are disulfide-bonded: cysteine 23/cysteine 165 and cysteine 90/cysteine 183. An N-linked (GlcNAc...) (complex) asparagine glycan is attached at asparagine 33. A glycan (N-linked (GlcNAc...) asparagine) is linked at asparagine 56. Asparagine 72 carries an N-linked (GlcNAc...) (complex) asparagine glycan. 2 N-linked (GlcNAc...) asparagine glycosylation sites follow: asparagine 93 and asparagine 103.

It belongs to the calycin superfamily. Lipocalin family. Post-translationally, N-glycosylated. N-glycan heterogeneity at Asn-33: Hex5HexNAc4 (minor), Hex6HexNAc5 (major) and dHex1Hex6HexNAc5 (minor). As to expression, expressed by the liver and secreted in plasma.

The protein resides in the secreted. Functions as a transport protein in the blood stream. Binds various ligands in the interior of its beta-barrel domain. Also binds synthetic drugs and influences their distribution and availability in the body. Appears to function in modulating the activity of the immune system during the acute-phase reaction. This is Alpha-1-acid glycoprotein 1 (ORM1) from Homo sapiens (Human).